The chain runs to 234 residues: MTPSEQNIDKEELAKFSDLAQDWWNPAGKMKPLHLINPVRLKYIEQQITLKGKHVLDVGCGGGLLSEALAKHGAIVTGVDMSESLIDVAKNHAEQQQLNINYQCQDIEILTKDAQRFDIITCMELLEHVPDPQRMIKNCAALIKPGGKLFFSTINRNFKAYLYTIVGAEYVFNLLPKGTHDYAQFIHPSELTQWAESGGLRLLDITGIHYHPLKNEFDLSRDVSVNYLACFTHE.

The S-adenosyl-L-methionine site is built by arginine 40, glycine 59, aspartate 80, and methionine 123.

This sequence belongs to the methyltransferase superfamily. UbiG/COQ3 family.

The catalysed reaction is a 3-demethylubiquinol + S-adenosyl-L-methionine = a ubiquinol + S-adenosyl-L-homocysteine + H(+). The enzyme catalyses a 3-(all-trans-polyprenyl)benzene-1,2-diol + S-adenosyl-L-methionine = a 2-methoxy-6-(all-trans-polyprenyl)phenol + S-adenosyl-L-homocysteine + H(+). It functions in the pathway cofactor biosynthesis; ubiquinone biosynthesis. Functionally, O-methyltransferase that catalyzes the 2 O-methylation steps in the ubiquinone biosynthetic pathway. In Coxiella burnetii (strain Dugway 5J108-111), this protein is Ubiquinone biosynthesis O-methyltransferase.